Consider the following 78-residue polypeptide: Acyl carrier protein (78 aa).

One can recognise a Carrier domain in the interval 1 to 76; the sequence is MALFEDIQAV…DVVKYIEDNK (76 aa). Ser-36 is modified (O-(pantetheine 4'-phosphoryl)serine).

Belongs to the acyl carrier protein (ACP) family. Post-translationally, 4'-phosphopantetheine is transferred from CoA to a specific serine of apo-ACP by AcpS. This modification is essential for activity because fatty acids are bound in thioester linkage to the sulfhydryl of the prosthetic group.

It localises to the cytoplasm. Its pathway is lipid metabolism; fatty acid biosynthesis. Its function is as follows. Carrier of the growing fatty acid chain in fatty acid biosynthesis. The sequence is that of Acyl carrier protein from Helicobacter pylori (strain J99 / ATCC 700824) (Campylobacter pylori J99).